The sequence spans 251 residues: Large ribosomal subunit protein uL16m (251 aa).

Residues 1 to 29 (MWRLLTRAPAPLWRMHFSDTWAALPTSAG) constitute a mitochondrion transit peptide.

It belongs to the universal ribosomal protein uL16 family. Component of the mitochondrial ribosome large subunit (39S) which comprises a 16S rRNA and about 50 distinct proteins.

The protein localises to the mitochondrion. The chain is Large ribosomal subunit protein uL16m (Mrpl16) from Rattus norvegicus (Rat).